We begin with the raw amino-acid sequence, 117 residues long: Fluoride-specific ion channel FluC 2 (117 aa).

Helical transmembrane passes span 4 to 24 (FLIG…GDII), 31 to 51 (KFPW…GIIT), 59 to 79 (LSMI…TFMY), and 94 to 114 (LIYI…GEFI). Na(+) is bound by residues Gly69 and Thr72.

This sequence belongs to the fluoride channel Fluc/FEX (TC 1.A.43) family.

It localises to the cell membrane. The catalysed reaction is fluoride(in) = fluoride(out). With respect to regulation, na(+) is not transported, but it plays an essential structural role and its presence is essential for fluoride channel function. Its function is as follows. Fluoride-specific ion channel. Important for reducing fluoride concentration in the cell, thus reducing its toxicity. In Clostridium acetobutylicum (strain ATCC 824 / DSM 792 / JCM 1419 / IAM 19013 / LMG 5710 / NBRC 13948 / NRRL B-527 / VKM B-1787 / 2291 / W), this protein is Fluoride-specific ion channel FluC 2.